A 440-amino-acid chain; its full sequence is Endoglucanase B (440 aa).

The N-terminal stretch at 1 to 33 (MNKRLSRGKISLLASVFVTTTFMGGVNVLASTA) is a signal peptide. Glu179 (proton donor) is an active-site residue. The Nucleophile role is filled by Glu305. One can recognise a Dockerin domain in the interval 381–440 (TSYSLGDVNKDGKVNAIDYAVLKSILLGTNTNVDLSVSDMNKDGKVNALDLAVLKKMLLS).

The protein belongs to the glycosyl hydrolase 5 (cellulase A) family.

It catalyses the reaction Endohydrolysis of (1-&gt;4)-beta-D-glucosidic linkages in cellulose, lichenin and cereal beta-D-glucans.. The enzyme catalyses Endohydrolysis of (1-&gt;4)-beta-D-xylosidic linkages in xylans.. Has endoglucanase activity on carboxymethyl-cellulose (CMC), xylan and lichenan, but not Avicel. In Clostridium cellulovorans (strain ATCC 35296 / DSM 3052 / OCM 3 / 743B), this protein is Endoglucanase B (engB).